The sequence spans 217 residues: UPF0502 protein VIBHAR_05349 (217 aa).

It belongs to the UPF0502 family.

This is UPF0502 protein VIBHAR_05349 from Vibrio campbellii (strain ATCC BAA-1116).